A 307-amino-acid polypeptide reads, in one-letter code: tRNA dimethylallyltransferase (307 aa).

9–16 lines the ATP pocket; sequence GPTAVGKT. 11–16 provides a ligand contact to substrate; that stretch reads TAVGKT. The interaction with substrate tRNA stretch occupies residues 34–37; sequence DSMQ.

Belongs to the IPP transferase family. As to quaternary structure, monomer. Mg(2+) serves as cofactor.

The enzyme catalyses adenosine(37) in tRNA + dimethylallyl diphosphate = N(6)-dimethylallyladenosine(37) in tRNA + diphosphate. Functionally, catalyzes the transfer of a dimethylallyl group onto the adenine at position 37 in tRNAs that read codons beginning with uridine, leading to the formation of N6-(dimethylallyl)adenosine (i(6)A). This is tRNA dimethylallyltransferase from Limosilactobacillus reuteri (strain DSM 20016) (Lactobacillus reuteri).